Here is a 190-residue protein sequence, read N- to C-terminus: Elongation factor P (190 aa).

It belongs to the elongation factor P family.

Its subcellular location is the cytoplasm. It functions in the pathway protein biosynthesis; polypeptide chain elongation. In terms of biological role, involved in peptide bond synthesis. Stimulates efficient translation and peptide-bond synthesis on native or reconstituted 70S ribosomes in vitro. Probably functions indirectly by altering the affinity of the ribosome for aminoacyl-tRNA, thus increasing their reactivity as acceptors for peptidyl transferase. This Mycoplasma genitalium (strain ATCC 33530 / DSM 19775 / NCTC 10195 / G37) (Mycoplasmoides genitalium) protein is Elongation factor P (efp).